We begin with the raw amino-acid sequence, 36 residues long: Esculentin-2R (36 aa).

Cys30 and Cys36 form a disulfide bridge.

In terms of tissue distribution, expressed by the skin glands.

Its subcellular location is the secreted. Its function is as follows. Antimicrobial peptide. The chain is Esculentin-2R from Pelophylax ridibundus (Marsh frog).